The primary structure comprises 317 residues: tRNA-dihydrouridine(16) synthase (317 aa).

FMN contacts are provided by residues P7–E9 and Q68. Residue C98 is the Proton donor of the active site. FMN-binding positions include K139, N199–E201, and G223–R224.

The protein belongs to the Dus family. DusC subfamily. FMN serves as cofactor.

The enzyme catalyses 5,6-dihydrouridine(16) in tRNA + NADP(+) = uridine(16) in tRNA + NADPH + H(+). It catalyses the reaction 5,6-dihydrouridine(16) in tRNA + NAD(+) = uridine(16) in tRNA + NADH + H(+). Its function is as follows. Catalyzes the synthesis of 5,6-dihydrouridine (D), a modified base found in the D-loop of most tRNAs, via the reduction of the C5-C6 double bond in target uridines. Specifically modifies U16 in tRNAs. This is tRNA-dihydrouridine(16) synthase from Pseudomonas syringae pv. tomato (strain ATCC BAA-871 / DC3000).